The following is a 188-amino-acid chain: Epididymal-specific lipocalin-5 (188 aa).

A signal peptide spans 1 to 19; that stretch reads MENIMPFALLGLCVGLAAG. Cysteine 82 and cysteine 176 form a disulfide bridge.

The protein belongs to the calycin superfamily. Lipocalin family. There are two similar, immunologically cross-reacting forms of this protein, designated B and C, which probably result from different processing of the amino end. In terms of processing, the N-terminus of form C is probably blocked. As to expression, synthesized exclusively in the proximal part (caput epididymidis) of the epididymis. It makes up a substantial part of the total protein in the epididymal luminal fluid and binds to the sperm membrane.

The protein localises to the secreted. Its function is as follows. Associates with spermatozoa in the epididymal fluid but does not bind tightly to them. Binds both all-trans and 9-cis retinoic acid. May act as a retinoid carrier protein which is required for epididymal function and/or sperm maturation. This chain is Epididymal-specific lipocalin-5 (Lcn5), found in Rattus norvegicus (Rat).